Reading from the N-terminus, the 44-residue chain is Large ribosomal subunit protein bL34 (44 aa).

Belongs to the bacterial ribosomal protein bL34 family.

This Ehrlichia ruminantium (strain Gardel) protein is Large ribosomal subunit protein bL34.